We begin with the raw amino-acid sequence, 211 residues long: MEYISPFDRFIRHFDSALRVMSGVSAASRPSPASGVADGVLDDAERRHSAGLMRVNHVGEVCAQALYQAQAQFAHSDAIKQQFELAGREEEDHLAWTAQRLRELGSHPSLLNPLWYAGAYALGTVAAKLGDARSLGFVVETERQVEAHLNEHMNRLPPQDAKSLAVVAQMSADEVAHGSAAQALGAQAVPPLAQKGMQAISKIMTTTAYYI.

Residues Glu-60, Glu-90, His-93, Glu-142, Glu-174, and His-177 each coordinate Fe cation.

The protein belongs to the COQ7 family. Fe cation serves as cofactor.

The protein resides in the cell membrane. It carries out the reaction a 5-methoxy-2-methyl-3-(all-trans-polyprenyl)benzene-1,4-diol + AH2 + O2 = a 3-demethylubiquinol + A + H2O. The protein operates within cofactor biosynthesis; ubiquinone biosynthesis. Its function is as follows. Catalyzes the hydroxylation of 2-nonaprenyl-3-methyl-6-methoxy-1,4-benzoquinol during ubiquinone biosynthesis. This chain is 3-demethoxyubiquinol 3-hydroxylase, found in Herminiimonas arsenicoxydans.